A 257-amino-acid chain; its full sequence is MSMVETAPSKIQVRDLNFYYGKFHALKNINLDIAKNQVTAFIGPSGCGKSTLLRTFNKMYSLYPEQRAEGEILLDGDNILTNTQDIALLRAKVGMVFQKPTPFPMSIYDNIAFGVRLFEKLSRADMDERVQWALTKAALWNETKDKLHQSGYSLSGGQQQRLCIARGIAIRPEVLLLDEPCSALDPISTGRIEELITELKQDYTVVIVTHNMQQAARCSDHTAFMYLGELIEFSNTDDLFTKPAKKQTEDYITGRYG.

In terms of domain architecture, ABC transporter spans 11 to 252 (IQVRDLNFYY…PAKKQTEDYI (242 aa)). 43–50 (GPSGCGKS) lines the ATP pocket.

Belongs to the ABC transporter superfamily. Phosphate importer (TC 3.A.1.7) family. The complex is composed of two ATP-binding proteins (PstB), two transmembrane proteins (PstC and PstA) and a solute-binding protein (PstS).

It localises to the cell inner membrane. The enzyme catalyses phosphate(out) + ATP + H2O = ADP + 2 phosphate(in) + H(+). Functionally, part of the ABC transporter complex PstSACB involved in phosphate import. Responsible for energy coupling to the transport system. The polypeptide is Phosphate import ATP-binding protein PstB (Salmonella paratyphi A (strain ATCC 9150 / SARB42)).